Here is a 246-residue protein sequence, read N- to C-terminus: Probable transcriptional regulatory protein ASA_2843 (246 aa).

Belongs to the TACO1 family.

It is found in the cytoplasm. The chain is Probable transcriptional regulatory protein ASA_2843 from Aeromonas salmonicida (strain A449).